A 130-amino-acid chain; its full sequence is Small ribosomal subunit protein uS8A (130 aa).

It belongs to the universal ribosomal protein uS8 family. As to quaternary structure, component of the small ribosomal subunit (SSU). Mature yeast ribosomes consist of a small (40S) and a large (60S) subunit. The 40S small subunit contains 1 molecule of ribosomal RNA (18S rRNA) and at least 33 different proteins. The large 60S subunit contains 3 rRNA molecules (25S, 5.8S and 5S rRNA) and at least 46 different proteins.

The protein localises to the cytoplasm. Its subcellular location is the nucleus. In terms of biological role, component of the ribosome, a large ribonucleoprotein complex responsible for the synthesis of proteins in the cell. The small ribosomal subunit (SSU) binds messenger RNAs (mRNAs) and translates the encoded message by selecting cognate aminoacyl-transfer RNA (tRNA) molecules. The large subunit (LSU) contains the ribosomal catalytic site termed the peptidyl transferase center (PTC), which catalyzes the formation of peptide bonds, thereby polymerizing the amino acids delivered by tRNAs into a polypeptide chain. The nascent polypeptides leave the ribosome through a tunnel in the LSU and interact with protein factors that function in enzymatic processing, targeting, and the membrane insertion of nascent chains at the exit of the ribosomal tunnel. The chain is Small ribosomal subunit protein uS8A (rps2201) from Schizosaccharomyces pombe (strain 972 / ATCC 24843) (Fission yeast).